Consider the following 122-residue polypeptide: Diacylglycerol kinase (122 aa).

2 residues coordinate ATP: arginine 10 and tyrosine 17. Substrate-binding positions include arginine 10, 14–19, and 23–26; these read AAGYSW and RAAW. Glutamate 29 lines the ATP pocket. Glutamate 29 contacts a divalent metal cation. Residues 31–35, 48–51, arginine 56, and glutamate 70 contribute to the substrate site; these read AFRQE and WLDV. The chain crosses the membrane as a helical span at residues 35–55; that stretch reads EGVAVLLAVVIACWLDVDAIT. Residues 57–77 form a helical membrane-spanning segment; sequence VLLISSVMLVMIVEILNSAIE. The Proton acceptor role is filled by glutamate 70. Residues glutamate 77, 86 to 88, and 95 to 96 contribute to the ATP site; these read EYH and KD. Residue glutamate 77 coordinates a divalent metal cation. A helical transmembrane segment spans residues 98 to 118; the sequence is GSAAVLIAIIVAVITWCILLW. Substrate-binding positions include serine 99 and 113–118; that span reads WCILLW.

The protein belongs to the bacterial diacylglycerol kinase family. Mg(2+) is required as a cofactor.

The protein resides in the cell inner membrane. It catalyses the reaction a 1,2-diacyl-sn-glycerol + ATP = a 1,2-diacyl-sn-glycero-3-phosphate + ADP + H(+). Catalyzes the ATP-dependent phosphorylation of sn-l,2-diacylglycerol (DAG) to phosphatidic acid. Involved in the recycling of diacylglycerol produced as a by-product during membrane-derived oligosaccharide (MDO) biosynthesis. This Shigella flexneri protein is Diacylglycerol kinase (dgkA).